Here is a 249-residue protein sequence, read N- to C-terminus: Large ribosomal subunit protein uL1 (249 aa).

The protein belongs to the universal ribosomal protein uL1 family. As to quaternary structure, part of the 50S ribosomal subunit.

Its function is as follows. Binds directly to 23S rRNA. The L1 stalk is quite mobile in the ribosome, and is involved in E site tRNA release. In terms of biological role, protein L1 is also a translational repressor protein, it controls the translation of the L11 operon by binding to its mRNA. The sequence is that of Large ribosomal subunit protein uL1 from Orientia tsutsugamushi (strain Ikeda) (Rickettsia tsutsugamushi).